The following is a 649-amino-acid chain: Transcription factor tau 95 kDa subunit (649 aa).

Residues 1–21 (MPVEEPLATLSSIPDSSADQA) are disordered. Residues 9-19 (TLSSIPDSSAD) are compositionally biased toward polar residues. Copy 1 of the repeat occupies 221 to 239 (PSTDFQLPPPPKLSMVGFP). Positions 221–419 (PSTDFQLPPP…PPLVFESDTP (199 aa)) are 2 X repeats, Pro-rich. The short motif at 296 to 300 (AKKTK) is the Nuclear localization signal element. Repeat unit 2 spans residues 400–419 (PIVKKNVPKPPPLVFESDTP). The disordered stretch occupies residues 556–612 (IAAGDDFDDNGAITEEPDDAALENEEMDTDQNLKVPASIDDDVDDVDADEEEQESFD). 2 stretches are compositionally biased toward acidic residues: residues 560 to 584 (DDFDDNGAITEEPDDAALENEEMDT) and 594 to 610 (IDDDVDDVDADEEEQES). Position 617 is a phosphoserine (Ser-617).

Belongs to the TFIIIC subunit 5 family. Component of the TFIIIC complex composed of TFC1, TFC3, TFC4, TFC6, TFC7 and TFC8. The subunits are organized in two globular domains, tauA and tauB, connected by a proteolysis-sensitive and flexible linker. Interacts with TFC3, TFC4 and TFC6.

The protein localises to the nucleus. TFIIIC mediates tRNA and 5S RNA gene activation by binding to intragenic promoter elements. Upstream of the transcription start site, TFIIIC assembles the initiation complex TFIIIB-TFIIIC-tDNA, which is sufficient for RNA polymerase III recruitment and function. Part of the tauA domain of TFIIIC that binds boxA DNA promoter sites of tRNA and similar genes. Participates in the interconnection of tauA with tauB via its contacts with TFC3 and TFC6. Serves as a scaffold critical for tauA-DNA spatial configuration and tauB-DNA stability. This is Transcription factor tau 95 kDa subunit (TFC1) from Saccharomyces cerevisiae (strain ATCC 204508 / S288c) (Baker's yeast).